A 132-amino-acid chain; its full sequence is Small ribosomal subunit protein uS8 (132 aa).

The protein belongs to the universal ribosomal protein uS8 family. As to quaternary structure, part of the 30S ribosomal subunit. Contacts proteins S5 and S12.

In terms of biological role, one of the primary rRNA binding proteins, it binds directly to 16S rRNA central domain where it helps coordinate assembly of the platform of the 30S subunit. This chain is Small ribosomal subunit protein uS8, found in Rickettsia felis (strain ATCC VR-1525 / URRWXCal2) (Rickettsia azadi).